We begin with the raw amino-acid sequence, 205 residues long: Small ribosomal subunit protein uS4 (205 aa).

The tract at residues 21–47 (GRPKSPFNKRDYGPGQHGQGRKGKPSD) is disordered. The region spanning 94–154 (RRLDSVVYRA…DKSKQLAIID (61 aa)) is the S4 RNA-binding domain.

The protein belongs to the universal ribosomal protein uS4 family. In terms of assembly, part of the 30S ribosomal subunit. Contacts protein S5. The interaction surface between S4 and S5 is involved in control of translational fidelity.

Its function is as follows. One of the primary rRNA binding proteins, it binds directly to 16S rRNA where it nucleates assembly of the body of the 30S subunit. In terms of biological role, with S5 and S12 plays an important role in translational accuracy. The sequence is that of Small ribosomal subunit protein uS4 from Pelagibacter ubique (strain HTCC1062).